Reading from the N-terminus, the 478-residue chain is tRNA modification GTPase MnmE (478 aa).

Residues Arg-36, Glu-94, and Lys-133 each coordinate (6S)-5-formyl-5,6,7,8-tetrahydrofolate. A TrmE-type G domain is found at 230–402; sequence GIHVVLAGRP…LVETLCAKVG (173 aa). Asn-240 contacts K(+). GTP is bound by residues 240–245, 259–265, and 284–287; these read NAGKSS, TDVAGTT, and DTAG. Position 244 (Ser-244) interacts with Mg(2+). The K(+) site is built by Thr-259, Val-261, and Thr-264. Thr-265 is a binding site for Mg(2+). (6S)-5-formyl-5,6,7,8-tetrahydrofolate is bound at residue Lys-478.

The protein belongs to the TRAFAC class TrmE-Era-EngA-EngB-Septin-like GTPase superfamily. TrmE GTPase family. In terms of assembly, homodimer. Heterotetramer of two MnmE and two MnmG subunits. The cofactor is K(+).

It localises to the cytoplasm. In terms of biological role, exhibits a very high intrinsic GTPase hydrolysis rate. Involved in the addition of a carboxymethylaminomethyl (cmnm) group at the wobble position (U34) of certain tRNAs, forming tRNA-cmnm(5)s(2)U34. The protein is tRNA modification GTPase MnmE of Psychrobacter cryohalolentis (strain ATCC BAA-1226 / DSM 17306 / VKM B-2378 / K5).